Consider the following 363-residue polypeptide: Histidinol-phosphate aminotransferase (363 aa).

K218 carries the post-translational modification N6-(pyridoxal phosphate)lysine.

It belongs to the class-II pyridoxal-phosphate-dependent aminotransferase family. Histidinol-phosphate aminotransferase subfamily. Homodimer. It depends on pyridoxal 5'-phosphate as a cofactor.

The enzyme catalyses L-histidinol phosphate + 2-oxoglutarate = 3-(imidazol-4-yl)-2-oxopropyl phosphate + L-glutamate. It functions in the pathway amino-acid biosynthesis; L-histidine biosynthesis; L-histidine from 5-phospho-alpha-D-ribose 1-diphosphate: step 7/9. This is Histidinol-phosphate aminotransferase from Xanthomonas axonopodis pv. citri (strain 306).